The following is a 101-amino-acid chain: Urease subunit beta (101 aa).

It belongs to the urease beta subunit family. In terms of assembly, heterotrimer of UreA (gamma), UreB (beta) and UreC (alpha) subunits. Three heterotrimers associate to form the active enzyme.

It is found in the cytoplasm. It catalyses the reaction urea + 2 H2O + H(+) = hydrogencarbonate + 2 NH4(+). It functions in the pathway nitrogen metabolism; urea degradation; CO(2) and NH(3) from urea (urease route): step 1/1. This Rhizobium rhizogenes (strain K84 / ATCC BAA-868) (Agrobacterium radiobacter) protein is Urease subunit beta.